A 155-amino-acid chain; its full sequence is uncharacterized protein (155 aa).

This is an uncharacterized protein from Agrobacterium vitis (Rhizobium vitis).